A 496-amino-acid polypeptide reads, in one-letter code: Polyphosphate:AMP phosphotransferase (496 aa).

PPK2 regions lie at residues 11-234 (IDKD…LQAA) and 269-495 (LDKD…YKKD).

The protein belongs to the polyphosphate kinase 2 (PPK2) family. Class II subfamily. In terms of assembly, homodimer. It depends on Mg(2+) as a cofactor.

The catalysed reaction is [phosphate](n) + ADP = [phosphate](n+1) + AMP. Uses inorganic polyphosphate (polyP) as a donor to convert AMP to ADP. Can also convert GMP to GDP, with lower efficiency. Cannot dephosphorylate ADP in the presence of polyP. The sequence is that of Polyphosphate:AMP phosphotransferase from Pseudomonas aeruginosa (strain ATCC 15692 / DSM 22644 / CIP 104116 / JCM 14847 / LMG 12228 / 1C / PRS 101 / PAO1).